The following is a 218-amino-acid chain: CTP-dependent diacylglycerol kinase 1 (218 aa).

At methionine 1–lysine 19 the chain is on the lumenal side. Residues alanine 20–tyrosine 37 form a helical membrane-spanning segment. Histidine 38 is a topological domain (cytoplasmic). Residues alanine 39–isoleucine 59 traverse the membrane as a helical segment. Residues arginine 60–glycine 88 lie on the Lumenal side of the membrane. The chain crosses the membrane as a helical span at residues valine 89–valine 109. Topologically, residues methionine 110–leucine 142 are cytoplasmic. Residues alanine 143–phenylalanine 163 traverse the membrane as a helical segment. The Lumenal portion of the chain corresponds to arginine 164–proline 179. Helical transmembrane passes span tryptophan 180 to leucine 200 and aspartate 201 to isoleucine 217. Methionine 218 is a topological domain (lumenal).

It belongs to the DGK1 family. It depends on Ca(2+) as a cofactor. Mg(2+) is required as a cofactor.

The protein localises to the endoplasmic reticulum membrane. Its subcellular location is the nucleus membrane. The catalysed reaction is a 1,2-diacyl-sn-glycerol + CTP = a 1,2-diacyl-sn-glycero-3-phosphate + CDP + H(+). CTP-dependent diacylglycerol kinase that catalyzes the phosphorylation of diacylglycerol (DAG) to phosphatidate (PA). Controls phosphatidate levels at the nuclear envelope. Counteracts the activity of PA phosphatase ned1. May be involved in vesicle trafficking between the endoplasmic reticulum and the Golgi apparatus. Involved in pre-tRNA splicing. The polypeptide is CTP-dependent diacylglycerol kinase 1 (ptp4) (Schizosaccharomyces pombe (strain 972 / ATCC 24843) (Fission yeast)).